The chain runs to 376 residues: Putative F-box protein At2g33200 (376 aa).

The region spanning 6 to 53 (YDWSKLCHDILRLILESLHYKDYHRARTVCSNWYTASTTCKRPLYPWR) is the F-box domain.

The polypeptide is Putative F-box protein At2g33200 (Arabidopsis thaliana (Mouse-ear cress)).